A 27-amino-acid chain; its full sequence is Bombinin-like peptide 2 (27 aa).

The residue at position 27 (Asn27) is an Asparagine amide.

Belongs to the bombinin family. Expressed by the skin glands.

It is found in the secreted. Functionally, has antimicrobial activity, but no hemolytic activity. Preference on killing Gram-negative non-enteric bacteria. This is Bombinin-like peptide 2 from Bombina orientalis (Oriental fire-bellied toad).